A 531-amino-acid polypeptide reads, in one-letter code: Type 2 DNA topoisomerase 6 subunit B (531 aa).

ATP is bound by residues N42, D76, 97–98 (SK), 106–113 (GMYGLGVK), and K427.

The protein belongs to the TOP6B family. Homodimer. Heterotetramer of two Top6A and two Top6B chains.

The catalysed reaction is ATP-dependent breakage, passage and rejoining of double-stranded DNA.. Its function is as follows. Relaxes both positive and negative superturns and exhibits a strong decatenase activity. The polypeptide is Type 2 DNA topoisomerase 6 subunit B (Metallosphaera sedula (strain ATCC 51363 / DSM 5348 / JCM 9185 / NBRC 15509 / TH2)).